The sequence spans 428 residues: Histidine--tRNA ligase (428 aa).

The protein belongs to the class-II aminoacyl-tRNA synthetase family. Homodimer.

It localises to the cytoplasm. The enzyme catalyses tRNA(His) + L-histidine + ATP = L-histidyl-tRNA(His) + AMP + diphosphate + H(+). This is Histidine--tRNA ligase from Chlamydia trachomatis serovar A (strain ATCC VR-571B / DSM 19440 / HAR-13).